A 106-amino-acid polypeptide reads, in one-letter code: UPF0145 protein VC_A0951 (106 aa).

This sequence belongs to the UPF0145 family.

The sequence is that of UPF0145 protein VC_A0951 from Vibrio cholerae serotype O1 (strain ATCC 39315 / El Tor Inaba N16961).